The sequence spans 370 residues: 3-dehydroquinate synthase (370 aa).

NAD(+)-binding positions include 112–116 (GVVGD), 136–137 (TS), K149, K158, and 176–179 (TLRT). Zn(2+) contacts are provided by E191, H254, and H276.

This sequence belongs to the sugar phosphate cyclases superfamily. Dehydroquinate synthase family. NAD(+) serves as cofactor. Requires Co(2+) as cofactor. The cofactor is Zn(2+).

It is found in the cytoplasm. The catalysed reaction is 7-phospho-2-dehydro-3-deoxy-D-arabino-heptonate = 3-dehydroquinate + phosphate. The protein operates within metabolic intermediate biosynthesis; chorismate biosynthesis; chorismate from D-erythrose 4-phosphate and phosphoenolpyruvate: step 2/7. Functionally, catalyzes the conversion of 3-deoxy-D-arabino-heptulosonate 7-phosphate (DAHP) to dehydroquinate (DHQ). This chain is 3-dehydroquinate synthase, found in Xanthomonas axonopodis pv. citri (strain 306).